The chain runs to 476 residues: Aspartyl/glutamyl-tRNA(Asn/Gln) amidotransferase subunit B (476 aa).

The protein belongs to the GatB/GatE family. GatB subfamily. As to quaternary structure, heterotrimer of A, B and C subunits.

The catalysed reaction is L-glutamyl-tRNA(Gln) + L-glutamine + ATP + H2O = L-glutaminyl-tRNA(Gln) + L-glutamate + ADP + phosphate + H(+). The enzyme catalyses L-aspartyl-tRNA(Asn) + L-glutamine + ATP + H2O = L-asparaginyl-tRNA(Asn) + L-glutamate + ADP + phosphate + 2 H(+). Functionally, allows the formation of correctly charged Asn-tRNA(Asn) or Gln-tRNA(Gln) through the transamidation of misacylated Asp-tRNA(Asn) or Glu-tRNA(Gln) in organisms which lack either or both of asparaginyl-tRNA or glutaminyl-tRNA synthetases. The reaction takes place in the presence of glutamine and ATP through an activated phospho-Asp-tRNA(Asn) or phospho-Glu-tRNA(Gln). The protein is Aspartyl/glutamyl-tRNA(Asn/Gln) amidotransferase subunit B of Clostridium botulinum (strain Alaska E43 / Type E3).